Here is a 75-residue protein sequence, read N- to C-terminus: MLGALMGVAGGAPMGGASPMGGMPSIASSSSAETGQQTQSGNFTGGGINFGSNNNNQLLIVGAVVIGLFLVIKRK.

Positions 19-47 (PMGGMPSIASSSSAETGQQTQSGNFTGGG) are disordered. Positions 26–39 (IASSSSAETGQQTQ) are enriched in polar residues. The helical transmembrane segment at 55 to 72 (NNQLLIVGAVVIGLFLVI) threads the bilayer.

Its subcellular location is the virion membrane. The polypeptide is Protein P8 (VIII) (Pseudoalteromonas phage PM2 (Bacteriophage PM2)).